The chain runs to 497 residues: Cytochrome P450 2D6 (497 aa).

Asp-301 is a binding site for substrate. Residue Cys-443 participates in heme binding.

The protein belongs to the cytochrome P450 family. It depends on heme as a cofactor.

The protein localises to the endoplasmic reticulum membrane. It localises to the microsome membrane. The enzyme catalyses (5Z,8Z,11Z,14Z)-eicosatetraenoate + reduced [NADPH--hemoprotein reductase] + O2 = (8R,9S)-epoxy-(5Z,11Z,14Z)-eicosatrienoate + oxidized [NADPH--hemoprotein reductase] + H2O + H(+). It carries out the reaction (5Z,8Z,11Z,14Z)-eicosatetraenoate + reduced [NADPH--hemoprotein reductase] + O2 = (11R,12S)-epoxy-(5Z,8Z,14Z)-eicosatrienoate + oxidized [NADPH--hemoprotein reductase] + H2O + H(+). It catalyses the reaction (5Z,8Z,11Z,14Z)-eicosatetraenoate + reduced [NADPH--hemoprotein reductase] + O2 = (14S,15R)-epoxy-(5Z,8Z,11Z)-eicosatrienoate + oxidized [NADPH--hemoprotein reductase] + H2O + H(+). The catalysed reaction is N-(5Z,8Z,11Z,14Z-eicosatetraenoyl)-ethanolamine + reduced [NADPH--hemoprotein reductase] + O2 = N-(8,9-epoxy-5Z,11Z,14Z-eicosatrienoyl)-ethanolamine + oxidized [NADPH--hemoprotein reductase] + H2O + H(+). The enzyme catalyses N-(5Z,8Z,11Z,14Z-eicosatetraenoyl)-ethanolamine + reduced [NADPH--hemoprotein reductase] + O2 = N-(11,12-epoxy-5Z,8Z,14Z-eicosatrienoyl)-ethanolamine + oxidized [NADPH--hemoprotein reductase] + H2O + H(+). It carries out the reaction N-(5Z,8Z,11Z,14Z-eicosatetraenoyl)-ethanolamine + reduced [NADPH--hemoprotein reductase] + O2 = N-(14,15-epoxy-5Z,8Z,11Z-eicosatrienoyl)-ethanolamine + oxidized [NADPH--hemoprotein reductase] + H2O + H(+). It catalyses the reaction N-(5Z,8Z,11Z,14Z-eicosatetraenoyl)-ethanolamine + reduced [NADPH--hemoprotein reductase] + O2 = N-(20-hydroxy-5Z,8Z,11Z,14Z-eicosatetraenoyl)-ethanolamine + oxidized [NADPH--hemoprotein reductase] + H2O + H(+). The catalysed reaction is (5Z,8Z,11Z,14Z,17Z)-eicosapentaenoate + reduced [NADPH--hemoprotein reductase] + O2 = (17S,18R)-epoxy-(5Z,8Z,11Z,14Z)-eicosatetraenoate + oxidized [NADPH--hemoprotein reductase] + H2O + H(+). The enzyme catalyses (4Z,7Z,10Z,13Z,16Z,19Z)-docosahexaenoate + reduced [NADPH--hemoprotein reductase] + O2 = (19R,20S)-epoxy-(4Z,7Z,10Z,13Z,16Z)-docosapentaenoate + oxidized [NADPH--hemoprotein reductase] + H2O + H(+). It carries out the reaction (4Z,7Z,10Z,13Z,16Z,19Z)-docosahexaenoate + reduced [NADPH--hemoprotein reductase] + O2 = (19S,20R)-epoxy-(4Z,7Z,10Z,13Z,16Z)-docosapentaenoate + oxidized [NADPH--hemoprotein reductase] + H2O + H(+). It catalyses the reaction cholesterol + reduced [NADPH--hemoprotein reductase] + O2 = 25-hydroxycholesterol + oxidized [NADPH--hemoprotein reductase] + H2O + H(+). The catalysed reaction is all-trans-retinol + reduced [NADPH--hemoprotein reductase] + O2 = all-trans-retinal + oxidized [NADPH--hemoprotein reductase] + 2 H2O + H(+). Its pathway is cofactor metabolism; retinol metabolism. It functions in the pathway lipid metabolism; fatty acid metabolism. The protein operates within steroid metabolism; cholesterol metabolism. Functionally, a cytochrome P450 monooxygenase involved in the metabolism of fatty acids, steroids and retinoids. Mechanistically, uses molecular oxygen inserting one oxygen atom into a substrate, and reducing the second into a water molecule, with two electrons provided by NADPH via cytochrome P450 reductase (NADPH--hemoprotein reductase). Catalyzes the epoxidation of double bonds of polyunsaturated fatty acids (PUFA). Metabolizes endocannabinoid arachidonoylethanolamide (anandamide) to 20-hydroxyeicosatetraenoic acid ethanolamide (20-HETE-EA) and 8,9-, 11,12-, and 14,15-epoxyeicosatrienoic acid ethanolamides (EpETrE-EAs), potentially modulating endocannabinoid system signaling. Catalyzes the hydroxylation of carbon-hydrogen bonds. Metabolizes cholesterol toward 25-hydroxycholesterol, a physiological regulator of cellular cholesterol homeostasis. Catalyzes the oxidative transformations of all-trans retinol to all-trans retinal, a precursor for the active form all-trans-retinoic acid. Also involved in the oxidative metabolism of drugs such as antiarrhythmics, adrenoceptor antagonists, and tricyclic antidepressants. The chain is Cytochrome P450 2D6 from Homo sapiens (Human).